A 300-amino-acid chain; its full sequence is Ribosomal protein bS6--L-glutamate ligase (300 aa).

In terms of domain architecture, ATP-grasp spans 104–287; it reads MQLLARQGID…IAGKMIRWIE (184 aa). ATP contacts are provided by residues Lys-141, 178 to 179, Asp-187, and 211 to 213; these read EY and RSN. Asp-248, Glu-260, and Asn-262 together coordinate Mg(2+). Residues Asp-248, Glu-260, and Asn-262 each coordinate Mn(2+).

The protein belongs to the RimK family. The cofactor is Mg(2+). It depends on Mn(2+) as a cofactor.

In terms of biological role, an L-glutamate ligase that catalyzes the ATP-dependent post-translational addition of glutamate residues to the C-terminus of ribosomal protein bS6 (RpsF). Is also able to catalyze the synthesis of poly-alpha-glutamate in vitro, via ATP hydrolysis from unprotected glutamate as substrate. The number of glutamate residues added to either RpsF or to poly-alpha-glutamate changes with pH. This chain is Ribosomal protein bS6--L-glutamate ligase, found in Escherichia coli O7:K1 (strain IAI39 / ExPEC).